The following is a 508-amino-acid chain: WD repeat-containing protein JIP5 (508 aa).

WD repeat units lie at residues 46–94 (LATG…GVET), 105–144 (RHKGSVRCICFDADGTHIYSVGTDNVLKKADTLTGKVVKK), 150–189 (GQNVKYTKLVKSATHPLVLLGDENGNVTVLNSESLEQTNL), 194–234 (HNGD…EGDF), 252–293 (DQED…LADQ), and 344–381 (SKLDEVTFLDLDSEYRLLSGGLDKAKLWDSEKSEQLTP). The interval 372 to 508 (DSEKSEQLTP…THGIRRFEGL (137 aa)) is disordered. Basic and acidic residues predominate over residues 491 to 508 (IKPERSMKTHGIRRFEGL).

This sequence belongs to the WD repeat WDR55 family.

The protein localises to the nucleus. The protein resides in the nucleolus. The protein is WD repeat-containing protein JIP5 (JIP5) of Eremothecium gossypii (strain ATCC 10895 / CBS 109.51 / FGSC 9923 / NRRL Y-1056) (Yeast).